We begin with the raw amino-acid sequence, 118 residues long: Large ribosomal subunit protein uL18 (118 aa).

The protein belongs to the universal ribosomal protein uL18 family. Part of the 50S ribosomal subunit; part of the 5S rRNA/L5/L18/L25 subcomplex. Contacts the 5S and 23S rRNAs.

Its function is as follows. This is one of the proteins that bind and probably mediate the attachment of the 5S RNA into the large ribosomal subunit, where it forms part of the central protuberance. This Rickettsia bellii (strain OSU 85-389) protein is Large ribosomal subunit protein uL18.